A 651-amino-acid polypeptide reads, in one-letter code: MSTLLPFPDLNLMPDSQSSTAGTTAGDTVVTGKLEVKSEPIEEWQTPPSSTSDQSANTDLIAEFIRISELFRSAFKPLQVKGLDGVSVYGLDSGAIVAVPEKENRELIEPPPGFKDNRVSTVVVSPKFERPRELARIAILGHEQRKELRQVMKRTRMTYESLRIHLMAESMKNHVLGQGRRRRSDMAAAYIMRDRGLWLNYDKHIVGPVTGVEVGDIFFYRMELCVLGLHGQTQAGIDCLTAERSATGEPIATSIVVSGGYEDDEDTGDVLVYTGHGGQDHQHKQCDNQRLVGGNLGMERSMHYGIEVRVIRGIKYENSISSKVYVYDGLYKIVDWWFAVGKSGFGVFKFRLVRIEGQPMMGSAVMRFAQTLRNKPSMVRPTGYVSFDLSNKKENVPVFLYNDVDGDQEPRHYEYIAKAVFPPGIFGQGGISRTGCECKLSCTDDCLCARKNGGEFAYDDNGHLLKGKHVVFECGEFCTCGPSCKSRVTQKGLRNRLEVFRSKETGWGVRTLDLIEAGAFICEYAGVVVTRLQAEILSMNGDVMVYPGRFTDQWRNWGDLSQVYPDFVRPNYPSLPPLDFSMDVSRMRNVACYISHSKEPNVMVQFVLHDHNHLMFPRVMLFALENISPLAELSLDYGLADEVNGKLAICN.

The interval 1–28 (MSTLLPFPDLNLMPDSQSSTAGTTAGDT) is disordered. Low complexity predominate over residues 15–28 (DSQSSTAGTTAGDT). Residues 202–358 (DKHIVGPVTG…KFRLVRIEGQ (157 aa)) enclose the YDG domain. The Pre-SET domain maps to 434–492 (TGCECKLSCTDDCLCARKNGGEFAYDDNGHLLKGKHVVFECGEFCTCGPSCKSRVTQKG). 9 residues coordinate Zn(2+): cysteine 436, cysteine 438, cysteine 442, cysteine 446, cysteine 448, cysteine 474, cysteine 478, cysteine 480, and cysteine 484. One can recognise an SET domain in the interval 495-638 (NRLEVFRSKE…PLAELSLDYG (144 aa)).

Belongs to the class V-like SAM-binding methyltransferase superfamily. Histone-lysine methyltransferase family. Suvar3-9 subfamily. In terms of assembly, self-interacts. Interacts with DNA-directed RNA polymerase V subunit NRPE1 and with DRD1 and DMS3. Binds to MORC1/CRT1. Expressed at low levels in leaves stems and flowers.

Its subcellular location is the nucleus. It localises to the chromosome. It is found in the centromere. Functionally, histone methyltransferase family member that plays a central role in gene silencing. Together with MORC6 and SUVH9, regulates the silencing of some transposable elements (TEs). According to PubMed:15775980, it is required for normal methylation of 'Lys-9' and 'Lys-27' of histone H3, 'Lys-20' of H4, and cytosine, but PubMed:19043555 see no significant effect on histone methylation when the gene is mutated. According to PubMed:19043555, the protein does not bind S-adenosyl-L-methionine and lacks methyltransferase activity. Instead, it may function downstream of DRM2 in RNA-directed DNA methylation, binding to methylated DNA and recruiting DNA-directed RNA polymerase V to chromatin. This Arabidopsis thaliana (Mouse-ear cress) protein is Histone-lysine N-methyltransferase family member SUVH2 (SUVH2).